The following is a 464-amino-acid chain: MMARRDPKSWAKRLVRAQTLQKQRRAPVGPRAPPPDEEDPRLKCKNCGAFGHTARSTRCPMKCWKAALVPATLGKKEGKENLKPWKPRVEANPGPLNKDKGEKEERPRQQDPQRKALLHMFSGKPPEKPLPNGKGSTESSDHLRVASGPMPVHTTSKRPRVDPVLADRSAAEMSGRGSVLASLSPLRKASLSSSSSLGPKERQTGAAADIPQPAVRHQGREPLLVVKPTHSRPEGGCREVPQAASKTHGLLQAARPQAQDKRPAVTSQPCPPAATHSLGLGSNLSFGPGAKRPAQAPIQACLNFPKKPRLGPFQIPESAIQGGELGAPENLQPPPAATELGPSTSPQMGRRTPAQVPSVDRQPPHSTPCLPTAQACTMSHHSAASHDGAQPLRVLFRRLENGRWSSSLLAAPSFHSPEKPGAFLAQSPHVSEKSEAPCVRVPPSVLYEDLQVSSSSEDSDSDLE.

Disordered stretches follow at residues 1 to 42 (MMAR…DPRL), 70 to 389 (PATL…HDGA), and 415 to 437 (HSPE…SEAP). Composition is skewed to basic and acidic residues over residues 74–89 (GKKE…KPRV) and 97–114 (NKDK…DPQR). Low complexity predominate over residues 180 to 197 (LASLSPLRKASLSSSSSL).

This sequence belongs to the FAM90 family.

In Homo sapiens (Human), this protein is Protein FAM90A16.